The chain runs to 243 residues: Leucyl/phenylalanyl-tRNA--protein transferase (243 aa).

Positions 1–22 (MHSQPYLLSPTPNTPFPPAEHA) are disordered.

It belongs to the L/F-transferase family.

The protein localises to the cytoplasm. The enzyme catalyses N-terminal L-lysyl-[protein] + L-leucyl-tRNA(Leu) = N-terminal L-leucyl-L-lysyl-[protein] + tRNA(Leu) + H(+). The catalysed reaction is N-terminal L-arginyl-[protein] + L-leucyl-tRNA(Leu) = N-terminal L-leucyl-L-arginyl-[protein] + tRNA(Leu) + H(+). It carries out the reaction L-phenylalanyl-tRNA(Phe) + an N-terminal L-alpha-aminoacyl-[protein] = an N-terminal L-phenylalanyl-L-alpha-aminoacyl-[protein] + tRNA(Phe). In terms of biological role, functions in the N-end rule pathway of protein degradation where it conjugates Leu, Phe and, less efficiently, Met from aminoacyl-tRNAs to the N-termini of proteins containing an N-terminal arginine or lysine. This chain is Leucyl/phenylalanyl-tRNA--protein transferase, found in Xylella fastidiosa (strain M23).